A 127-amino-acid polypeptide reads, in one-letter code: Protein ApaG (127 aa).

Positions 3 to 127 (KSETYRIEVE…FMLAMPRVLH (125 aa)) constitute an ApaG domain.

This is Protein ApaG from Azoarcus sp. (strain BH72).